Consider the following 453-residue polypeptide: Glutamyl-tRNA(Gln) amidotransferase subunit A (453 aa).

Residues lysine 56 and serine 131 each act as charge relay system in the active site. Serine 155 serves as the catalytic Acyl-ester intermediate.

It belongs to the amidase family. GatA subfamily. As to quaternary structure, heterotrimer of A, B and C subunits.

The catalysed reaction is L-glutamyl-tRNA(Gln) + L-glutamine + ATP + H2O = L-glutaminyl-tRNA(Gln) + L-glutamate + ADP + phosphate + H(+). In terms of biological role, allows the formation of correctly charged Gln-tRNA(Gln) through the transamidation of misacylated Glu-tRNA(Gln) in organisms which lack glutaminyl-tRNA synthetase. The reaction takes place in the presence of glutamine and ATP through an activated gamma-phospho-Glu-tRNA(Gln). This Campylobacter jejuni (strain RM1221) protein is Glutamyl-tRNA(Gln) amidotransferase subunit A.